We begin with the raw amino-acid sequence, 445 residues long: Putative H/ACA ribonucleoprotein complex subunit 4 (445 aa).

The interval 1 to 32 (MGKKDKRSKLEGDDLAEAQQKGSFQLPSSNET) is disordered. Positions 20–32 (QKGSFQLPSSNET) are enriched in polar residues. Asp-113 serves as the catalytic Nucleophile. Positions 284-359 (HKRVVVKDSC…VVAKSKRVIM (76 aa)) constitute a PUA domain. The disordered stretch occupies residues 386 to 445 (LDKFGKPNDTTPKSWAKEYVQTSTKKEVKKEETPDEEEEEAPKKKSKKSKKQESSDSDSD).

Belongs to the pseudouridine synthase TruB family. In terms of assembly, component of the small nucleolar ribonucleoprotein particle containing H/ACA-type snoRNAs (H/ACA snoRNPs).

The protein resides in the nucleus. The protein localises to the nucleolus. The enzyme catalyses a uridine in RNA = a pseudouridine in RNA. Plays a central role in ribosomal RNA processing. Probable catalytic subunit of H/ACA small nucleolar ribonucleoprotein (H/ACA snoRNP) complex, which catalyzes pseudouridylation of rRNA. This involves the isomerization of uridine such that the ribose is subsequently attached to C5, instead of the normal N1. Pseudouridine ('psi') residues may serve to stabilize the conformation of rRNAs. In Caenorhabditis elegans, this protein is Putative H/ACA ribonucleoprotein complex subunit 4.